A 280-amino-acid polypeptide reads, in one-letter code: MAKIIDGKAIAAKIRGEITAEVAKLAAQGITPGLAVVLVGEDPASKVYVSMKEKACKDVGIFSDEYKLPAETTEEELLQLIDKLNKDRKIHGILVQLPLPKQINTEKVLEAISPEKDADGFHPYNVGRLVIGKPLFQPCTPYGVMVMLKETGVDLAGKEVVVVGRSNIVGKPVAFMCLQQNATVTLCHSKTRDLAAKVAMADVVIAAVGQPEMIKGAWIKKGAVVIDVGVNRVGEKKLVGDVEYEAASARASAITPVPGGVGPMTITMLLYNTLESAKRR.

NADP(+) is bound by residues 164–166, Ser-189, and Val-230; that span reads GRS.

Belongs to the tetrahydrofolate dehydrogenase/cyclohydrolase family. As to quaternary structure, homodimer.

It carries out the reaction (6R)-5,10-methylene-5,6,7,8-tetrahydrofolate + NADP(+) = (6R)-5,10-methenyltetrahydrofolate + NADPH. The enzyme catalyses (6R)-5,10-methenyltetrahydrofolate + H2O = (6R)-10-formyltetrahydrofolate + H(+). It participates in one-carbon metabolism; tetrahydrofolate interconversion. Catalyzes the oxidation of 5,10-methylenetetrahydrofolate to 5,10-methenyltetrahydrofolate and then the hydrolysis of 5,10-methenyltetrahydrofolate to 10-formyltetrahydrofolate. In Geotalea daltonii (strain DSM 22248 / JCM 15807 / FRC-32) (Geobacter daltonii), this protein is Bifunctional protein FolD.